Reading from the N-terminus, the 236-residue chain is Baculoviral IAP repeat-containing protein 8 (236 aa).

Residues 7–70 (RLITFGTWMY…KWYPGCKYLL (64 aa)) form a BIR repeat. Zn(2+)-binding residues include cysteine 39, cysteine 42, histidine 59, and cysteine 66. The RING-type zinc finger occupies 189 to 224 (CKICMDRHIAVVFIPCGHLVTCKQCAEAVDRCPMCS).

The protein belongs to the IAP family. Binds to caspase-9. Testis specific in normal tissues.

Its subcellular location is the cytoplasm. Functionally, protects against apoptosis mediated by BAX. This Homo sapiens (Human) protein is Baculoviral IAP repeat-containing protein 8 (BIRC8).